Reading from the N-terminus, the 388-residue chain is Succinyl-diaminopimelate desuccinylase (388 aa).

His-72 is a binding site for Zn(2+). Asp-74 is an active-site residue. Asp-105 contacts Zn(2+). Glu-139 acts as the Proton acceptor in catalysis. Zn(2+)-binding residues include Glu-140, Glu-168, and His-353.

It belongs to the peptidase M20A family. DapE subfamily. In terms of assembly, homodimer. Zn(2+) is required as a cofactor. Requires Co(2+) as cofactor.

The enzyme catalyses N-succinyl-(2S,6S)-2,6-diaminopimelate + H2O = (2S,6S)-2,6-diaminopimelate + succinate. Its pathway is amino-acid biosynthesis; L-lysine biosynthesis via DAP pathway; LL-2,6-diaminopimelate from (S)-tetrahydrodipicolinate (succinylase route): step 3/3. Its function is as follows. Catalyzes the hydrolysis of N-succinyl-L,L-diaminopimelic acid (SDAP), forming succinate and LL-2,6-diaminopimelate (DAP), an intermediate involved in the bacterial biosynthesis of lysine and meso-diaminopimelic acid, an essential component of bacterial cell walls. This chain is Succinyl-diaminopimelate desuccinylase, found in Orientia tsutsugamushi (strain Boryong) (Rickettsia tsutsugamushi).